Reading from the N-terminus, the 553-residue chain is Putative transport protein YidE (553 aa).

5 consecutive transmembrane segments (helical) span residues Ile-4–Val-24, Gly-28–Ser-48, Phe-65–Ser-85, Leu-95–Phe-115, and Met-158–Leu-178. RCK C-terminal domains lie at Gln-191–Gln-276 and Asp-279–Asn-361. 5 helical membrane passes run Met-371–Val-391, Phe-394–Gly-414, Ile-439–Val-459, Leu-464–Leu-484, and Leu-533–Gly-553.

Belongs to the AAE transporter (TC 2.A.81) family. YidE subfamily.

It localises to the cell membrane. This Shigella dysenteriae serotype 1 (strain Sd197) protein is Putative transport protein YidE.